The chain runs to 490 residues: N-succinylglutamate 5-semialdehyde dehydrogenase (490 aa).

223–228 (GSAGTG) is an NAD(+) binding site. Residues Glu-246 and Cys-280 contribute to the active site.

Belongs to the aldehyde dehydrogenase family. AstD subfamily.

The enzyme catalyses N-succinyl-L-glutamate 5-semialdehyde + NAD(+) + H2O = N-succinyl-L-glutamate + NADH + 2 H(+). The protein operates within amino-acid degradation; L-arginine degradation via AST pathway; L-glutamate and succinate from L-arginine: step 4/5. Its function is as follows. Catalyzes the NAD-dependent reduction of succinylglutamate semialdehyde into succinylglutamate. The protein is N-succinylglutamate 5-semialdehyde dehydrogenase of Serratia proteamaculans (strain 568).